Consider the following 457-residue polypeptide: UDP-N-acetylglucosamine 1-carboxyvinyltransferase (457 aa).

34 to 35 (KN) is a binding site for phosphoenolpyruvate. A UDP-N-acetyl-alpha-D-glucosamine-binding site is contributed by Arg-104. Cys-128 acts as the Proton donor in catalysis. Position 128 is a 2-(S-cysteinyl)pyruvic acid O-phosphothioketal (Cys-128). Residues Asp-319 and Ile-341 each contribute to the UDP-N-acetyl-alpha-D-glucosamine site. The disordered stretch occupies residues 436 to 457 (INKSKNRSSNSKLKEVSEIRAA). The segment covering 447-457 (KLKEVSEIRAA) has biased composition (basic and acidic residues).

The protein belongs to the EPSP synthase family. MurA subfamily.

It localises to the cytoplasm. The enzyme catalyses phosphoenolpyruvate + UDP-N-acetyl-alpha-D-glucosamine = UDP-N-acetyl-3-O-(1-carboxyvinyl)-alpha-D-glucosamine + phosphate. Its pathway is cell wall biogenesis; peptidoglycan biosynthesis. Cell wall formation. Adds enolpyruvyl to UDP-N-acetylglucosamine. The sequence is that of UDP-N-acetylglucosamine 1-carboxyvinyltransferase from Prochlorococcus marinus subsp. pastoris (strain CCMP1986 / NIES-2087 / MED4).